The following is a 336-amino-acid chain: S-adenosylmethionine:tRNA ribosyltransferase-isomerase (336 aa).

It belongs to the QueA family. As to quaternary structure, monomer.

It is found in the cytoplasm. The catalysed reaction is 7-aminomethyl-7-carbaguanosine(34) in tRNA + S-adenosyl-L-methionine = epoxyqueuosine(34) in tRNA + adenine + L-methionine + 2 H(+). It participates in tRNA modification; tRNA-queuosine biosynthesis. Its function is as follows. Transfers and isomerizes the ribose moiety from AdoMet to the 7-aminomethyl group of 7-deazaguanine (preQ1-tRNA) to give epoxyqueuosine (oQ-tRNA). In Sulfurihydrogenibium sp. (strain YO3AOP1), this protein is S-adenosylmethionine:tRNA ribosyltransferase-isomerase.